Reading from the N-terminus, the 870-residue chain is Lysosomal cholesterol signaling protein (870 aa).

The Lumenal segment spans residues 1–38 (MNSNLPAENLTIAVNMTKTLPTAVTHGFNSTNDPPSMS). The segment at 1-370 (MNSNLPAENL…SAWLLTFPTM (370 aa)) is PIN-like transporter. Residues N9, N15, and N29 are each glycosylated (N-linked (GlcNAc...) asparagine). A helical membrane pass occupies residues 39–59 (ITRLFPALLECFGIVLCGYIA). F43 and Y57 together coordinate cholesterol. The Cytoplasmic segment spans residues 60-79 (GRANVITSTQAKGLGNFVSR). A helical transmembrane segment spans residues 80 to 100 (FALPALLFKNMVVLNFSNVDW). At 101-104 (SFLY) the chain is on the lumenal side. Residues 105–125 (SILIAKASVFFIVCVLTLLVA) form a helical membrane-spanning segment. At 126–133 (SPDSRFSK) the chain is on the cytoplasmic side. Residues 134-154 (AGLFPIFATQSNDFALGYPIV) traverse the membrane as a discontinuously helical segment. At 155–167 (EALYQTTYPEYLQ) the chain is on the lumenal side. A helical membrane pass occupies residues 168 to 188 (YIYLVAPISLMMLNPIGFIFC). The Cytoplasmic portion of the chain corresponds to 189–213 (EIQKWKDTQNASQNKIKIVGLGLLR). The discontinuously helical transmembrane segment at 214–234 (VLQNPIVFMVFIGIAFNFILD) threads the bilayer. At 235–243 (RKVPVYVEN) the chain is on the lumenal side. A discontinuously helical transmembrane segment spans residues 244–264 (FLDGLGNSFSGSALFYLGLTM). Residues 265-273 (VGKIKRLKK) are Cytoplasmic-facing. Cholesterol-binding residues include G266, K267, and I268. The chain crosses the membrane as a helical span at residues 274–294 (SAFVVLILLITAKLLVLPLLC). Residues 295–315 (REMVELLDKGDSVVNHTSLSN) are Lumenal-facing. N309 is a glycosylation site (N-linked (GlcNAc...) asparagine). Residues 316-336 (YAFLYGVFPVAPGVAIFATQF) form a discontinuously helical membrane-spanning segment. Residues 337–346 (NMEVEIITSG) lie on the Cytoplasmic side of the membrane. A helical transmembrane segment spans residues 347–367 (MVISTFVSAPIMYVSAWLLTF). At 368 to 381 (PTMDPKPLAYAIQN) the chain is on the lumenal side. The tract at residues 380–717 (QNVSFDISIV…FGIFGLDKHL (338 aa)) is GPCR. The N-linked (GlcNAc...) asparagine glycan is linked to N381. Residues 382 to 402 (VSFDISIVSLISLIWSLAILL) traverse the membrane as a helical segment. The Cytoplasmic segment spans residues 403-414 (LSKKYKQLPHML). The helical transmembrane segment at 415–435 (TTNLLIAQSIVCAGMMIWNFV) threads the bilayer. The Lumenal portion of the chain corresponds to 436–438 (KEK). A helical transmembrane segment spans residues 439 to 459 (NFVGQILVFVLLYSSLYSTYL). The Cytoplasmic segment spans residues 460 to 480 (WTGLLAISLFLLKKRERVQIP). A helical transmembrane segment spans residues 481 to 501 (VGIIIISGWGIPALLVGVLLI). The Lumenal segment spans residues 502 to 520 (TGKHNGDSIDSAFFYGKEQ). The chain crosses the membrane as a helical span at residues 521-541 (MITTAVTLFCSILIAGISLMC). The Cytoplasmic portion of the chain corresponds to 542–660 (MNQTAQAGSY…GDQQLTRHVL (119 aa)). Residue R657 participates in cholesterol binding. The chain crosses the membrane as a helical span at residues 661 to 681 (LCLLLIIGLFANLSSCLWWLF). Topologically, residues 682-691 (NQEPGRLYVE) are lumenal. The helical transmembrane segment at 692–712 (LQFFCAVFNFGQGFISFGIFG) threads the bilayer. At 713–870 (LDKHLIILPF…SSPPSHSPKT (158 aa)) the chain is on the cytoplasmic side. In terms of domain architecture, DEP spans 757-835 (YHRDLCIRNI…DEYLFYRFLQ (79 aa)).

In terms of assembly, homodimer; via the transporter region and DEP domain. Interacts with the GATOR1 complex and prevents interaction between GATOR1 and KICSTOR; this interaction is disrupted upon cholesterol starvation.

Its subcellular location is the lysosome membrane. Cholesterol-binding protein that acts as a regulator of mTORC1 signaling pathway. Acts as a sensor of cholesterol to signal cholesterol sufficiency to mTORC1: in presence of cholesterol, binds cholesterol, leading to disruption of the interaction between the GATOR1 and KICSTOR complexes and promotion of mTORC1 signaling. Upon cholesterol starvation, GPR155/LYCHOS is unable to perturb the association between GATOR1 and KICSTOR, leading to mTORC1 signaling inhibition. Binds indole-3-acetic acid and may play a role in tryptophan metabolism. The protein is Lysosomal cholesterol signaling protein of Homo sapiens (Human).